Reading from the N-terminus, the 938-residue chain is Isoleucine--tRNA ligase (938 aa).

The 'HIGH' region motif lies at 58–68 (PYANGNIHMGH). An L-isoleucyl-5'-AMP-binding site is contributed by Glu566. A 'KMSKS' region motif is present at residues 607 to 611 (KMSKS). Lys610 is an ATP binding site. Zn(2+)-binding residues include Cys906, Cys909, Cys926, and Cys929.

Belongs to the class-I aminoacyl-tRNA synthetase family. IleS type 1 subfamily. Monomer. Zn(2+) serves as cofactor.

The protein localises to the cytoplasm. It catalyses the reaction tRNA(Ile) + L-isoleucine + ATP = L-isoleucyl-tRNA(Ile) + AMP + diphosphate. In terms of biological role, catalyzes the attachment of isoleucine to tRNA(Ile). As IleRS can inadvertently accommodate and process structurally similar amino acids such as valine, to avoid such errors it has two additional distinct tRNA(Ile)-dependent editing activities. One activity is designated as 'pretransfer' editing and involves the hydrolysis of activated Val-AMP. The other activity is designated 'posttransfer' editing and involves deacylation of mischarged Val-tRNA(Ile). The sequence is that of Isoleucine--tRNA ligase from Nitratidesulfovibrio vulgaris (strain ATCC 29579 / DSM 644 / CCUG 34227 / NCIMB 8303 / VKM B-1760 / Hildenborough) (Desulfovibrio vulgaris).